A 156-amino-acid polypeptide reads, in one-letter code: Cyclic pyranopterin monophosphate synthase (156 aa).

Substrate is bound by residues 75-77 and 111-112; these read LCH and ME. Residue Asp126 is part of the active site.

Belongs to the MoaC family. Homohexamer; trimer of dimers.

The enzyme catalyses (8S)-3',8-cyclo-7,8-dihydroguanosine 5'-triphosphate = cyclic pyranopterin phosphate + diphosphate. It participates in cofactor biosynthesis; molybdopterin biosynthesis. Functionally, catalyzes the conversion of (8S)-3',8-cyclo-7,8-dihydroguanosine 5'-triphosphate to cyclic pyranopterin monophosphate (cPMP). The protein is Cyclic pyranopterin monophosphate synthase of Corynebacterium glutamicum (strain ATCC 13032 / DSM 20300 / JCM 1318 / BCRC 11384 / CCUG 27702 / LMG 3730 / NBRC 12168 / NCIMB 10025 / NRRL B-2784 / 534).